The chain runs to 448 residues: MNAHEVNFDGLVGPTHNYGGLSYGNVASQSNSQALSNPKEAAKQGLAKMKALMELGFKQGVLAPQARPDTAALRSLGFSGSDEEVIRRAAKEAMPLLAACSSASSMWTANAATVSPSADTADGRVHFTAANLNCKFHRSIEHPTTSRVLAAMFNDERHFAHHAALPAVSQFGDEGAANHTRFCKDYGDAGVEFFVFGRSAFDSRFPAPQRYPARQTLEACQAVARLHGLSEAGVVYAQQNPAVIDQGVFHNDVISVGNGEVLFHHEDAFLDTEKVLAELHDKLGRRGGRFRAICVPREQVAVEDAVKSYLFNSQLLSKADGSMLLVVPEECRNNPRVWNYLERLTGDDGPIREVKVFDLKQSMQNGGGPACLRLRVALKEQELAAVNPGVIMTAGLYDTLVAWVDRHYRDRLGEADLADPQLLQECRTALDELTQILKLGSVYSFQLD.

Substrate contacts are provided by residues 19–28, N110, and 137–138; these read GGLSYGNVAS and HR. The active site involves E174. R214 contributes to the substrate binding site. Residue H250 is part of the active site. 2 residues coordinate substrate: D252 and N365. Residue C371 is the Nucleophile of the active site.

It belongs to the succinylarginine dihydrolase family. In terms of assembly, homodimer.

The enzyme catalyses N(2)-succinyl-L-arginine + 2 H2O + 2 H(+) = N(2)-succinyl-L-ornithine + 2 NH4(+) + CO2. The protein operates within amino-acid degradation; L-arginine degradation via AST pathway; L-glutamate and succinate from L-arginine: step 2/5. In terms of biological role, catalyzes the hydrolysis of N(2)-succinylarginine into N(2)-succinylornithine, ammonia and CO(2). The chain is N-succinylarginine dihydrolase from Pseudomonas paraeruginosa (strain DSM 24068 / PA7) (Pseudomonas aeruginosa (strain PA7)).